The following is a 56-amino-acid chain: Protein translocase subunit SecE (56 aa).

A helical transmembrane segment spans residues 30–50 (VFWLVLFVSIFLGIVDYLMFL).

It belongs to the SecE/SEC61-gamma family. Component of the Sec protein translocase complex. Heterotrimer consisting of SecY, SecE and SecG subunits. The heterotrimers can form oligomers, although 1 heterotrimer is thought to be able to translocate proteins. Interacts with the ribosome. Interacts with SecDF, and other proteins may be involved. Interacts with SecA.

Its subcellular location is the cell inner membrane. In terms of biological role, essential subunit of the Sec protein translocation channel SecYEG. Clamps together the 2 halves of SecY. May contact the channel plug during translocation. In Borreliella burgdorferi (strain ATCC 35210 / DSM 4680 / CIP 102532 / B31) (Borrelia burgdorferi), this protein is Protein translocase subunit SecE.